The sequence spans 370 residues: Actin-related protein 2/3 complex subunit 1A (370 aa).

WD repeat units lie at residues 6–45 (FLLE…WVKA), 50–89 (EHNG…WKPT), 140–179 (PIRS…VDEK), 202–241 (GTGG…QVST), 244–284 (TEFL…TFVS), and 322–365 (LHQN…SSIQ).

Belongs to the WD repeat ARPC1 family. As to quaternary structure, probable component of the Arp2/3 complex in which it may replace ARPC1B. In addition to its role in the cytoplasmic cytoskeleton, the Arp2/3 complex also promotes actin polymerization in the nucleus, thereby regulating gene transcription and repair of damaged DNA.

The protein resides in the cytoplasm. It localises to the cytoskeleton. It is found in the nucleus. Functionally, probably functions as a component of the Arp2/3 complex which is involved in regulation of actin polymerization and together with an activating nucleation-promoting factor (NPF) mediates the formation of branched actin networks. In Homo sapiens (Human), this protein is Actin-related protein 2/3 complex subunit 1A (ARPC1A).